The following is a 153-amino-acid chain: Pheromone-binding protein Gp-9 (153 aa).

The signal sequence occupies residues 1–19 (MKTFVLHIFIFALVAFASA). Intrachain disulfides connect cysteine 37/cysteine 77, cysteine 73/cysteine 129, and cysteine 118/cysteine 138.

The protein belongs to the PBP/GOBP family. In terms of assembly, homodimer.

It localises to the secreted. Functionally, colony queen number, a major feature of social organization, is associated with worker genotype for Gp-9. Colonies are headed by either a single reproductive queen (monogyne form) or multiple queens (polygyne form). Differences in worker Gp-9 genotypes between social forms may cause differences in workers' abilities to recognize queens and regulate their numbers. In Solenopsis tridens (Fire ant), this protein is Pheromone-binding protein Gp-9.